The primary structure comprises 318 residues: L-malyl-CoA/beta-methylmalyl-CoA lyase (318 aa).

Residues Phe19, Arg24, Lys30, and Arg76 each coordinate substrate. The Mg(2+) site is built by Glu141 and Asp168. Residues 167–168 and 251–252 contribute to the substrate site; these read AD and IH.

The protein belongs to the HpcH/HpaI aldolase family. As to quaternary structure, homohexamer. Dimer of trimers. Mg(2+) serves as cofactor. Requires Mn(2+) as cofactor.

It carries out the reaction (S)-malyl-CoA = glyoxylate + acetyl-CoA. The catalysed reaction is (2R,3S)-beta-methylmalyl-CoA = propanoyl-CoA + glyoxylate. Involved in the ethylmalonyl-CoA pathway for acetate assimilation. Catalyzes the reversible condensation of glyoxylate and acetyl-CoA to L-malyl-CoA and the reversible condensation of glyoxylate and propionyl-CoA to yield beta-methylmalyl-CoA. The chain is L-malyl-CoA/beta-methylmalyl-CoA lyase from Cereibacter sphaeroides (strain ATCC 17025 / ATH 2.4.3) (Rhodobacter sphaeroides).